A 398-amino-acid chain; its full sequence is Chalcone synthase (398 aa).

Residue C169 is part of the active site.

The protein belongs to the thiolase-like superfamily. Chalcone/stilbene synthases family.

The enzyme catalyses (E)-4-coumaroyl-CoA + 3 malonyl-CoA + 3 H(+) = 2',4,4',6'-tetrahydroxychalcone + 3 CO2 + 4 CoA. It functions in the pathway secondary metabolite biosynthesis; flavonoid biosynthesis. In terms of biological role, the primary product of this enzyme is 4,2',4',6'-tetrahydroxychalcone (also termed naringenin-chalcone or chalcone) which can under specific conditions spontaneously isomerize into naringenin. The chain is Chalcone synthase (CHS) from Petroselinum crispum (Parsley).